The primary structure comprises 426 residues: Protein BTN1 (426 aa).

The signal sequence occupies residues 1 to 32 (MFIISETQRTFASFFIFGLLNNILYVIILSAA). Transmembrane regions (helical) follow at residues 44–64 (IVLLADIIPSFSFKVAAPFFI), 67–87 (VPYIIRLWTLVALSATGMVLI), 99–119 (ILGITLASLSSGLGEVSFLQL), 129–149 (IGGFSSGTGGAGLFGSFLFMV), 154–174 (MGFPVWVVLLICAVFPSGFII), 243–263 (ITPLILPYMLPLTTVYISEYV), 290–310 (IYVVYGFLYQLGVFISRSSVT), 318–338 (LYLLSVLQFINVMITLYQSIY), 340–360 (LPFHSIWWLFLLIFYEGLLGG), and 384–404 (GCVSISDSLGIVTAGCINWWL).

Belongs to the battenin family.

It localises to the vacuole membrane. Its function is as follows. Involved in vacuolar transport and vacuole pH homeostasis. Also required for cytokinesis. This Candida albicans (strain SC5314 / ATCC MYA-2876) (Yeast) protein is Protein BTN1 (BTN1).